The following is a 334-amino-acid chain: Probable peptidoglycan endopeptidase LytE (334 aa).

The signal sequence occupies residues 1–25; that stretch reads MKKQIITATTAVVLGSTLFAGAASA. 3 consecutive LysM domains span residues 26-69, 86-129, and 149-192; these read QSIK…TLSI, STYK…VLKL, and STYK…VLKV. 3 disordered regions span residues 70-89, 131-153, and 195-215; these read NGKSTSSKSSSSSSSSSTYK, GSTSSSSSSSSKVSSSSTSTYKV, and TSTSSSKPASSSSSSSSKTSS. Composition is skewed to low complexity over residues 72–87 and 132–153; these read KSTSSKSSSSSSSSST and STSSSSSSSSKVSSSSTSTYKV. The 118-residue stretch at 217–334 folds into the NlpC/P60 domain; sequence SLNVSKLVSD…KPRYLGAKRF (118 aa). The Nucleophile role is filled by cysteine 247. Histidine 296 acts as the Proton acceptor in catalysis. Histidine 308 is an active-site residue.

This sequence belongs to the peptidase C40 family.

Its subcellular location is the secreted. The protein localises to the cell wall. In terms of biological role, cell wall hydrolase that cleaves gamma-D-glutamate-meso-diaminopimelate bonds in peptidoglycan. Seems to play a role in cell separation during vegetative growth. This Bacillus subtilis (strain 168) protein is Probable peptidoglycan endopeptidase LytE (lytE).